Consider the following 202-residue polypeptide: Orotate phosphoribosyltransferase (202 aa).

Residues Lys93 and 113 to 121 (EDIITTGGS) contribute to the 5-phospho-alpha-D-ribose 1-diphosphate site. Orotate-binding residues include Thr117 and Arg145.

It belongs to the purine/pyrimidine phosphoribosyltransferase family. PyrE subfamily. Homodimer. Mg(2+) serves as cofactor.

It carries out the reaction orotidine 5'-phosphate + diphosphate = orotate + 5-phospho-alpha-D-ribose 1-diphosphate. Its pathway is pyrimidine metabolism; UMP biosynthesis via de novo pathway; UMP from orotate: step 1/2. Catalyzes the transfer of a ribosyl phosphate group from 5-phosphoribose 1-diphosphate to orotate, leading to the formation of orotidine monophosphate (OMP). The polypeptide is Orotate phosphoribosyltransferase (Campylobacter jejuni subsp. doylei (strain ATCC BAA-1458 / RM4099 / 269.97)).